Consider the following 202-residue polypeptide: Acireductone dioxygenase (202 aa).

Fe(2+) is bound by residues histidine 110, histidine 112, glutamate 116, and histidine 154. Ni(2+) contacts are provided by histidine 110, histidine 112, glutamate 116, and histidine 154.

Belongs to the acireductone dioxygenase (ARD) family. As to quaternary structure, monomer. It depends on Fe(2+) as a cofactor. Ni(2+) serves as cofactor.

It catalyses the reaction 1,2-dihydroxy-5-(methylsulfanyl)pent-1-en-3-one + O2 = 3-(methylsulfanyl)propanoate + CO + formate + 2 H(+). It carries out the reaction 1,2-dihydroxy-5-(methylsulfanyl)pent-1-en-3-one + O2 = 4-methylsulfanyl-2-oxobutanoate + formate + 2 H(+). It functions in the pathway amino-acid biosynthesis; L-methionine biosynthesis via salvage pathway; L-methionine from S-methyl-5-thio-alpha-D-ribose 1-phosphate: step 5/6. In terms of biological role, catalyzes 2 different reactions between oxygen and the acireductone 1,2-dihydroxy-3-keto-5-methylthiopentene (DHK-MTPene) depending upon the metal bound in the active site. Fe-containing acireductone dioxygenase (Fe-ARD) produces formate and 2-keto-4-methylthiobutyrate (KMTB), the alpha-ketoacid precursor of methionine in the methionine recycle pathway. Ni-containing acireductone dioxygenase (Ni-ARD) produces methylthiopropionate, carbon monoxide and formate, and does not lie on the methionine recycle pathway. The chain is Acireductone dioxygenase from Synechococcus sp. (strain CC9311).